The primary structure comprises 194 residues: Putative manganese efflux pump MntP (194 aa).

Transmembrane regions (helical) follow at residues 3-23, 37-57, 69-89, 110-132, 147-167, and 172-192; these read PFSI…AAIG, LRAG…GWVL, DHWI…IAGL, LGLA…SLAF, CTFS…NLIG, and ILGG…HLGA.

Belongs to the MntP (TC 9.B.29) family.

It is found in the cell inner membrane. In terms of biological role, probably functions as a manganese efflux pump. The protein is Putative manganese efflux pump MntP of Xanthomonas oryzae pv. oryzae (strain MAFF 311018).